An 84-amino-acid chain; its full sequence is MSEPIENLTVDAELDAVGLFCPEPVMMLHQKVRDLPAGGLLKVIATDPSTRRDIPKFCVFLGHELVAEQAEEGTFLYWIRKKSD.

The Cysteine persulfide intermediate role is filled by C21.

This sequence belongs to the sulfur carrier protein TusA family.

It localises to the cytoplasm. In terms of biological role, sulfur carrier protein which probably makes part of a sulfur-relay system. This is Sulfur carrier protein TusA from Pseudomonas syringae pv. syringae (strain B728a).